The following is a 345-amino-acid chain: Anthranilate phosphoribosyltransferase (345 aa).

5-phospho-alpha-D-ribose 1-diphosphate contacts are provided by residues Gly-88, 91–92, Thr-96, 98–101, 116–124, and Ser-128; these read GD, NIST, and KHGNRSASG. Anthranilate is bound at residue Gly-88. Residue Ser-100 coordinates Mg(2+). Asn-119 contacts anthranilate. Arg-174 lines the anthranilate pocket. Residues Asp-233 and Glu-234 each coordinate Mg(2+).

The protein belongs to the anthranilate phosphoribosyltransferase family. In terms of assembly, homodimer. The cofactor is Mg(2+).

The catalysed reaction is N-(5-phospho-beta-D-ribosyl)anthranilate + diphosphate = 5-phospho-alpha-D-ribose 1-diphosphate + anthranilate. It participates in amino-acid biosynthesis; L-tryptophan biosynthesis; L-tryptophan from chorismate: step 2/5. Its function is as follows. Catalyzes the transfer of the phosphoribosyl group of 5-phosphorylribose-1-pyrophosphate (PRPP) to anthranilate to yield N-(5'-phosphoribosyl)-anthranilate (PRA). The protein is Anthranilate phosphoribosyltransferase of Prochlorococcus marinus (strain NATL2A).